Consider the following 388-residue polypeptide: Succinate--CoA ligase [ADP-forming] subunit beta (388 aa).

Residues 9–245 (KALLKEYGMP…KSQENERELK (237 aa)) enclose the ATP-grasp domain. Residues Lys46, 53 to 55 (GRG), Glu100, Tyr103, and Glu108 each bind ATP. Mg(2+)-binding residues include Asn200 and Asp214. Residues Asn265 and 322 to 324 (GIV) contribute to the substrate site.

This sequence belongs to the succinate/malate CoA ligase beta subunit family. In terms of assembly, heterotetramer of two alpha and two beta subunits. Mg(2+) is required as a cofactor.

It carries out the reaction succinate + ATP + CoA = succinyl-CoA + ADP + phosphate. The enzyme catalyses GTP + succinate + CoA = succinyl-CoA + GDP + phosphate. Its pathway is carbohydrate metabolism; tricarboxylic acid cycle; succinate from succinyl-CoA (ligase route): step 1/1. Functionally, succinyl-CoA synthetase functions in the citric acid cycle (TCA), coupling the hydrolysis of succinyl-CoA to the synthesis of either ATP or GTP and thus represents the only step of substrate-level phosphorylation in the TCA. The beta subunit provides nucleotide specificity of the enzyme and binds the substrate succinate, while the binding sites for coenzyme A and phosphate are found in the alpha subunit. The chain is Succinate--CoA ligase [ADP-forming] subunit beta from Acinetobacter baumannii (strain AB307-0294).